Here is a 262-residue protein sequence, read N- to C-terminus: ATP synthase subunit delta (262 aa).

Belongs to the ATPase delta chain family. As to quaternary structure, F-type ATPases have 2 components, F(1) - the catalytic core - and F(0) - the membrane proton channel. F(1) has five subunits: alpha(3), beta(3), gamma(1), delta(1), epsilon(1). F(0) has three main subunits: a(1), b(2) and c(10-14). The alpha and beta chains form an alternating ring which encloses part of the gamma chain. F(1) is attached to F(0) by a central stalk formed by the gamma and epsilon chains, while a peripheral stalk is formed by the delta and b chains.

It localises to the cell membrane. Its function is as follows. F(1)F(0) ATP synthase produces ATP from ADP in the presence of a proton or sodium gradient. F-type ATPases consist of two structural domains, F(1) containing the extramembraneous catalytic core and F(0) containing the membrane proton channel, linked together by a central stalk and a peripheral stalk. During catalysis, ATP synthesis in the catalytic domain of F(1) is coupled via a rotary mechanism of the central stalk subunits to proton translocation. Functionally, this protein is part of the stalk that links CF(0) to CF(1). It either transmits conformational changes from CF(0) to CF(1) or is implicated in proton conduction. The sequence is that of ATP synthase subunit delta from Tropheryma whipplei (strain TW08/27) (Whipple's bacillus).